We begin with the raw amino-acid sequence, 241 residues long: Pyridoxal phosphate phosphatase PHOSPHO2 (241 aa).

Residue Asp-8 is the Nucleophile of the active site. Residues Asp-8 and Asp-10 each contribute to the Mg(2+) site. Catalysis depends on Asp-10, which acts as the Proton donor. Asp-19 and Asp-99 together coordinate substrate. Asp-179 provides a ligand contact to Mg(2+).

It belongs to the HAD-like hydrolase superfamily. PHOSPHO family. The cofactor is Mg(2+).

It catalyses the reaction pyridoxal 5'-phosphate + H2O = pyridoxal + phosphate. In terms of biological role, phosphatase that has high activity toward pyridoxal 5'-phosphate (PLP). Also active at much lower level toward pyrophosphate, phosphoethanolamine (PEA), phosphocholine (PCho), phospho-l-tyrosine, fructose-6-phosphate, p-nitrophenyl phosphate, and h-glycerophosphate. The protein is Pyridoxal phosphate phosphatase PHOSPHO2 (Phospho2) of Rattus norvegicus (Rat).